Consider the following 180-residue polypeptide: Translation initiation factor IF-3 (180 aa).

Belongs to the IF-3 family. Monomer.

The protein resides in the cytoplasm. In terms of biological role, IF-3 binds to the 30S ribosomal subunit and shifts the equilibrium between 70S ribosomes and their 50S and 30S subunits in favor of the free subunits, thus enhancing the availability of 30S subunits on which protein synthesis initiation begins. This is Translation initiation factor IF-3 from Caldanaerobacter subterraneus subsp. tengcongensis (strain DSM 15242 / JCM 11007 / NBRC 100824 / MB4) (Thermoanaerobacter tengcongensis).